The following is a 493-amino-acid chain: ATP synthase subunit beta, chloroplastic (493 aa).

Residue 170–177 (GGAGVGKT) participates in ATP binding.

This sequence belongs to the ATPase alpha/beta chains family. As to quaternary structure, F-type ATPases have 2 components, CF(1) - the catalytic core - and CF(0) - the membrane proton channel. CF(1) has five subunits: alpha(3), beta(3), gamma(1), delta(1), epsilon(1). CF(0) has four main subunits: a(1), b(1), b'(1) and c(9-12).

The protein resides in the plastid. It is found in the chloroplast thylakoid membrane. The catalysed reaction is ATP + H2O + 4 H(+)(in) = ADP + phosphate + 5 H(+)(out). Produces ATP from ADP in the presence of a proton gradient across the membrane. The catalytic sites are hosted primarily by the beta subunits. This is ATP synthase subunit beta, chloroplastic from Chaetosphaeridium globosum (Charophycean green alga).